A 351-amino-acid chain; its full sequence is Methylthioribose-1-phosphate isomerase (351 aa).

Substrate contacts are provided by residues 51 to 53, Arg-94, and Gln-199; that span reads RGA. Asp-240 functions as the Proton donor in the catalytic mechanism. 250–251 is a substrate binding site; sequence NK.

It belongs to the eIF-2B alpha/beta/delta subunits family. MtnA subfamily. As to quaternary structure, homodimer.

It carries out the reaction 5-(methylsulfanyl)-alpha-D-ribose 1-phosphate = 5-(methylsulfanyl)-D-ribulose 1-phosphate. It participates in amino-acid biosynthesis; L-methionine biosynthesis via salvage pathway; L-methionine from S-methyl-5-thio-alpha-D-ribose 1-phosphate: step 1/6. Catalyzes the interconversion of methylthioribose-1-phosphate (MTR-1-P) into methylthioribulose-1-phosphate (MTRu-1-P). The polypeptide is Methylthioribose-1-phosphate isomerase (Bacillus cereus (strain ATCC 10987 / NRS 248)).